The chain runs to 565 residues: Adenine deaminase 1 (565 aa).

This sequence belongs to the metallo-dependent hydrolases superfamily. Adenine deaminase family. Mn(2+) serves as cofactor.

It catalyses the reaction adenine + H2O + H(+) = hypoxanthine + NH4(+). The sequence is that of Adenine deaminase 1 from Rhizobium etli (strain ATCC 51251 / DSM 11541 / JCM 21823 / NBRC 15573 / CFN 42).